A 161-amino-acid polypeptide reads, in one-letter code: Cuticle protein 16.8 (161 aa).

Q1 is subject to Pyrrolidone carboxylic acid. The segment covering 1 to 10 has biased composition (pro residues); the sequence is QSEPAGPPQP. 2 disordered regions span residues 1–44 and 67–103; these read QSEP…YSYT and ETNE…PAKP. The Chitin-binding type R&amp;R domain occupies 8–74; sequence PQPYTFSYDN…TVETNEPGTK (67 aa). Polar residues predominate over residues 67–86; sequence ETNEPGTKTSNPADAQIVSN. The span at 87-103 shows a compositional bias: low complexity; sequence AATDSYSPSPASSPAKP.

Functionally, component of the cuticle of the tick. Binds chitin. This is Cuticle protein 16.8 from Ixodes ricinus (Common tick).